Consider the following 362-residue polypeptide: MSTSKRKIEHLELCAKRPVESRNVTSGFDDVMLIHKALPQIHMDEIDLSTDFLGKSLKAPFLIASITGGHPDTTPVNAALAEAAEELGVGIGVGSQRAAIEDPEQESSFSVVRDKAPNAFVYGNVGAAQIKEYGIEAIEKLVDMLDADALAVHLNFLQEAIQPEGDRDATGVLEMIKEVCSLNVPIIAKETGAGISKEDAALLKEAGVSAIDVGGVGGTSWSGVEVYRAHDSGDAISEDLGNLYWDFGIPTVSSVLECRSFVPVVATGGVRTGLDIAKSLSLGAYAASAALPFVGPALIGADEVVSSLSKMLNELRVAMFLCGCGNINELRTSSKVTVTGWTKEYITQRGFDPKDLDIRSDL.

6 to 7 (RK) provides a ligand contact to substrate. FMN contacts are provided by residues 65–67 (SIT), S95, and N124. 95-97 (SQR) contacts substrate. Q158 lines the substrate pocket. E159 is a Mg(2+) binding site. FMN contacts are provided by residues K189, T219, 269-271 (GVR), and 290-291 (AL).

The protein belongs to the IPP isomerase type 2 family. In terms of assembly, homooctamer. Dimer of tetramers. FMN serves as cofactor. The cofactor is NADPH. Mg(2+) is required as a cofactor.

Its subcellular location is the cytoplasm. The catalysed reaction is isopentenyl diphosphate = dimethylallyl diphosphate. Its function is as follows. Involved in the biosynthesis of isoprenoids. Catalyzes the 1,3-allylic rearrangement of the homoallylic substrate isopentenyl (IPP) to its allylic isomer, dimethylallyl diphosphate (DMAPP). This chain is Isopentenyl-diphosphate delta-isomerase, found in Methanococcoides burtonii (strain DSM 6242 / NBRC 107633 / OCM 468 / ACE-M).